The chain runs to 273 residues: Large ribosomal subunit protein uL2 (273 aa).

Residues 221-263 form a disordered region; it reads RGTAMNPVDHPHGGGEGRNFGKHPVTPWGVQTKGKKTRHNKRT. The span at 253–263 shows a compositional bias: basic residues; that stretch reads KGKKTRHNKRT.

It belongs to the universal ribosomal protein uL2 family. As to quaternary structure, part of the 50S ribosomal subunit. Forms a bridge to the 30S subunit in the 70S ribosome.

Functionally, one of the primary rRNA binding proteins. Required for association of the 30S and 50S subunits to form the 70S ribosome, for tRNA binding and peptide bond formation. It has been suggested to have peptidyltransferase activity; this is somewhat controversial. Makes several contacts with the 16S rRNA in the 70S ribosome. The protein is Large ribosomal subunit protein uL2 of Histophilus somni (strain 2336) (Haemophilus somnus).